Consider the following 462-residue polypeptide: UDP-N-acetylmuramoylalanine--D-glutamate ligase (462 aa).

Position 118–124 (118–124 (GTNGKST)) interacts with ATP.

This sequence belongs to the MurCDEF family.

Its subcellular location is the cytoplasm. It carries out the reaction UDP-N-acetyl-alpha-D-muramoyl-L-alanine + D-glutamate + ATP = UDP-N-acetyl-alpha-D-muramoyl-L-alanyl-D-glutamate + ADP + phosphate + H(+). It functions in the pathway cell wall biogenesis; peptidoglycan biosynthesis. Cell wall formation. Catalyzes the addition of glutamate to the nucleotide precursor UDP-N-acetylmuramoyl-L-alanine (UMA). The polypeptide is UDP-N-acetylmuramoylalanine--D-glutamate ligase (Anaeromyxobacter dehalogenans (strain 2CP-C)).